Reading from the N-terminus, the 277-residue chain is Undecaprenyl-diphosphatase (277 aa).

7 helical membrane passes run 3 to 23 (IALLIKAAIMGIVEGLTEFLP), 44 to 64 (AKVFDIAIQTGAIFAVILVYW), 82 to 102 (QFALNVLVAFVPAVVLGLLFG), 109 to 129 (LFTPVVVASAFIVGGFIILWA), 189 to 209 (TDFSFYLAIPTLIGAGAYSLF), 218 to 238 (ADAPMFGVGLLFSFLSAWLCI), and 253 to 273 (FAWYRIAFGIVVLATAWSGVV).

It belongs to the UppP family.

Its subcellular location is the cell inner membrane. The catalysed reaction is di-trans,octa-cis-undecaprenyl diphosphate + H2O = di-trans,octa-cis-undecaprenyl phosphate + phosphate + H(+). Its function is as follows. Catalyzes the dephosphorylation of undecaprenyl diphosphate (UPP). Confers resistance to bacitracin. The protein is Undecaprenyl-diphosphatase of Polaromonas naphthalenivorans (strain CJ2).